Here is a 134-residue protein sequence, read N- to C-terminus: Cytochrome b (134 aa).

Transmembrane regions (helical) follow at residues 33 to 53 (FGSLLGVCLAVQILTGVFLAM), 77 to 98 (WVLRYLHANGASMFFICLYVHV), and 113 to 133 (WNVGILLLFAVMATAFMGYVL). The heme b site is built by His83 and His97.

The protein belongs to the cytochrome b family. In terms of assembly, the cytochrome bc1 complex contains 11 subunits: 3 respiratory subunits (MT-CYB, CYC1 and UQCRFS1), 2 core proteins (UQCRC1 and UQCRC2) and 6 low-molecular weight proteins (UQCRH/QCR6, UQCRB/QCR7, UQCRQ/QCR8, UQCR10/QCR9, UQCR11/QCR10 and a cleavage product of UQCRFS1). This cytochrome bc1 complex then forms a dimer. It depends on heme b as a cofactor.

It is found in the mitochondrion inner membrane. Functionally, component of the ubiquinol-cytochrome c reductase complex (complex III or cytochrome b-c1 complex) that is part of the mitochondrial respiratory chain. The b-c1 complex mediates electron transfer from ubiquinol to cytochrome c. Contributes to the generation of a proton gradient across the mitochondrial membrane that is then used for ATP synthesis. The protein is Cytochrome b (MT-CYB) of Anoura caudifer (Hairy-legged long-tongued bat).